A 116-amino-acid chain; its full sequence is ATP-dependent Clp protease adapter protein ClpS (116 aa).

Over residues Met-1–Lys-11 the composition is skewed to polar residues. The disordered stretch occupies residues Met-1–Val-23.

It belongs to the ClpS family. Binds to the N-terminal domain of the chaperone ClpA.

Its function is as follows. Involved in the modulation of the specificity of the ClpAP-mediated ATP-dependent protein degradation. This chain is ATP-dependent Clp protease adapter protein ClpS, found in Brucella melitensis biotype 2 (strain ATCC 23457).